The primary structure comprises 285 residues: MVLMIVSGRSGSGKSVALRALEDMGFYCVDNLPVVLLPELANTLAARNISAAVSIDVRNMPESPEIFEHAMEQLPPSFSPQLLFLDADRNTLIRRYSDTRRLHPLSSKNLSLESAIDEESDLLEPLRSRADLIIDTSEMSVHELAEMLRTRLLGKRERELTMVFESFGFKHGIPIDADYVFDVRFLPNPHWDPKLRPMTGLDKPVASFLDRHTEVHNFIYQTRSYLELWLPMLETNNRSYLTVAIGCTGGKHRSVYVAEQLADYFRSRGKNVQSRHRTLEKRKPS.

8–15 (GRSGSGKS) is a binding site for ATP. A GTP-binding site is contributed by 56 to 59 (DVRN). The interval 266 to 285 (RSRGKNVQSRHRTLEKRKPS) is RNA-binding.

The protein belongs to the RapZ-like family. RapZ subfamily. Homotrimer.

Modulates the synthesis of GlmS, by affecting the processing and stability of the regulatory small RNA GlmZ. When glucosamine-6-phosphate (GlcN6P) concentrations are high in the cell, RapZ binds GlmZ and targets it to cleavage by RNase E. Consequently, GlmZ is inactivated and unable to activate GlmS synthesis. Under low GlcN6P concentrations, RapZ is sequestered and inactivated by an other regulatory small RNA, GlmY, preventing GlmZ degradation and leading to synthesis of GlmS. The chain is RNase adapter protein RapZ from Pectobacterium atrosepticum (strain SCRI 1043 / ATCC BAA-672) (Erwinia carotovora subsp. atroseptica).